The chain runs to 142 residues: Protein spalt-accessory (142 aa).

An N-terminal signal peptide occupies residues 1–16 (MKLLIALFVLVNAVIA). Gly residues predominate over residues 65–77 (GQGGVSPGQGGFA). The segment at 65–142 (GQGGVSPGQG…HHEHHGHHRH (78 aa)) is disordered. Over residues 112–124 (NHHEYPEHHGDHH) the composition is skewed to basic and acidic residues. Over residues 125 to 142 (REHHEHHGHHEHHGHHRH) the composition is skewed to basic residues.

It is found in the secreted. In terms of biological role, likely to be involved in the establishment of the head. This is Protein spalt-accessory (sala) from Drosophila orena (Fruit fly).